Here is a 181-residue protein sequence, read N- to C-terminus: Squamosa promoter-binding-like protein 5 (181 aa).

The segment covering 1–10 (MEGQRTQRRG) has biased composition (basic residues). The interval 1 to 58 (MEGQRTQRRGYLKDKATVSNLVEEEMENGMDGEEEDGGDEDKRKKVMERVRGPSTDRV) is disordered. A compositionally biased stretch (acidic residues) spans 22–39 (VEEEMENGMDGEEEDGGD). Basic and acidic residues predominate over residues 40–51 (EDKRKKVMERVR). An SBP-type zinc finger spans residues 60–137 (SRLCQVDRCT…AGHNERRRKI (78 aa)). 8 residues coordinate Zn(2+): Cys-63, Cys-68, Cys-85, His-88, Cys-104, Cys-107, His-111, and Cys-123. The short motif at 120–136 (KRSCRRRLAGHNERRRK) is the Bipartite nuclear localization signal element. The disordered stretch occupies residues 128–181 (AGHNERRRKISGDSFGEGSGRRGFSGQLIQTQERNRVDRKLPMTNSSFKRPQIR). Residues 170 to 181 (MTNSSFKRPQIR) show a composition bias toward polar residues.

The cofactor is Zn(2+). As to expression, expressed in the inflorescence apical meristem and young flowers.

The protein resides in the nucleus. The protein localises to the cytoplasm. In terms of biological role, trans-acting factor that binds specifically to the consensus nucleotide sequence 5'-TNCGTACAA-3' of AP1 promoter. Promotes both vegetative phase change and flowering. The polypeptide is Squamosa promoter-binding-like protein 5 (SPL5) (Arabidopsis thaliana (Mouse-ear cress)).